The sequence spans 189 residues: MTVHIHPAVDNGVKKGTGSFAGGTLVCKCSDRPVKVGIKGDVAHNHACGCTKCWKPDGATFSVVAVVPRGNVTVLENGDKLQIVDTSATIQRHACKVCGTHMFGRIENTGHPFYGLDFIHPELFYEQGSAAPEFAAFVSSIIESGVDPAQMPEIRSRLKELGLEPYDCLSPALMDAIAGHIAKTSRKAA.

The CENP-V/GFA domain occupies 20–167 (FAGGTLVCKC…LKELGLEPYD (148 aa)). Cys-27, Cys-29, Cys-48, Cys-50, Cys-53, Cys-95, and Cys-98 together coordinate Zn(2+).

It belongs to the Gfa family. Zn(2+) serves as cofactor.

The catalysed reaction is S-(hydroxymethyl)glutathione = glutathione + formaldehyde. The protein operates within one-carbon metabolism; formaldehyde degradation; formate from formaldehyde (glutathione route): step 1/3. Functionally, catalyzes the condensation of formaldehyde and glutathione to S-hydroxymethylglutathione. The chain is Glutathione-dependent formaldehyde-activating enzyme from Rhodopseudomonas palustris (strain BisA53).